Here is a 69-residue protein sequence, read N- to C-terminus: Amphipathic peptide Hp1404 (69 aa).

The signal sequence occupies residues 1–23 (MKTQFAILMITVVLMQMLVQTEG). F37 carries the phenylalanine amide modification. A propeptide spanning residues 41 to 69 (GLKNLDQLDDSFDSDLSDADVKLLREMFK) is cleaved from the precursor.

This sequence belongs to the non-disulfide-bridged peptide (NDBP) superfamily. Short antimicrobial peptide (group 4) family. As to expression, expressed by the venom gland.

The protein resides in the secreted. The protein localises to the target cell membrane. Its activity is regulated as follows. Antibacterial activity is decreased by serum. Functionally, antimicrobial peptide that acts by inducing concentration-dependent membrane disruption, implying a membrane-lytic mode of action. Acts with potent activity against Gram-positive bacteria (MIC=4.04-16.16 uM) including methicillin-resistant S.aureus (MRSA). Its activity on Gram-negative bacteria is controversial. Li and colleagues (2014) describe no activity towards E.coli and P.aeruginosa, while Kim and colleagues (2018) describe a potent activity towards P.aeruginosa (MIC=3.13-12.5 uM), and Luo and colleagues (2021) describe a potent activity against antibiotic-sensitive and -resistant Acinetobacter baumannii strains (MIC=3.2-10 uM). On S.aureus, possibly acts by impairing an unknown intracellular target and/or by interacting with the membrane, leading to the lateral expansion of the membrane area at high MIC concentrations, resulting in the formation of mesosome-like structures that leads to cell lysis. Shows moderate inhibition of P.aeruginosa biofilm formation. Administration of this peptide at sub-MIC concentrations in multiple treatments does not lead to resistance in S.aureus. Exhibits low toxicity and hemolytic activity against mammalian cell lines and BALB/c mice. In vivo, improves the survival rate of the MRSA infected BALB/c mice in the peritonitis model. This chain is Amphipathic peptide Hp1404, found in Heterometrus petersii (Asian forest scorpion).